Here is a 639-residue protein sequence, read N- to C-terminus: Putative oxidoreductase UacF (639 aa).

4Fe-4S ferredoxin-type domains follow at residues 3 to 32, 47 to 77, 78 to 107, 110 to 139, and 201 to 235; these read KFIA…ENWP, KGQA…TFQS, DSVQ…MVDT, QKCD…LMDD, and QQAT…YIRL. Residues Cys12, Cys15, Cys18, Cys22, Cys56, Cys59, Cys64, Cys68, Cys87, Cys90, Cys93, Cys97, Cys112, Cys115, Cys125, Cys129, Cys210, Cys213, Cys219, and Cys223 each contribute to the [4Fe-4S] cluster site.

[4Fe-4S] cluster serves as cofactor.

Functionally, involved in formate-dependent uric acid degradation under microaerobic and anaerobic conditions. May reduce the enzymes necessary for uric acid degradation. This chain is Putative oxidoreductase UacF, found in Escherichia coli (strain K12).